A 209-amino-acid chain; its full sequence is MQFNPIIIGVAGGSASGKTSVAQAILQRVGADRIAHIDHDRYYKDLSHLPLEERARFNFDHPDALDNDLLVAHLDALCAGQAVDLPTYDYATYVRLPYTERIEPRPVILVEGILIFYEPVLRRRMHIKLFVDTDADLRFIRRLRRDIAERGRSVESVIEQYLATVRPMHLEFVEPTKRYADVIFPGGGRNPIAIDMVVARIEAALQSMA.

ATP is bound at residue 12–19; sequence GGSASGKT.

It belongs to the uridine kinase family.

It localises to the cytoplasm. It catalyses the reaction uridine + ATP = UMP + ADP + H(+). It carries out the reaction cytidine + ATP = CMP + ADP + H(+). The protein operates within pyrimidine metabolism; CTP biosynthesis via salvage pathway; CTP from cytidine: step 1/3. Its pathway is pyrimidine metabolism; UMP biosynthesis via salvage pathway; UMP from uridine: step 1/1. This Chloroflexus aggregans (strain MD-66 / DSM 9485) protein is Uridine kinase.